A 796-amino-acid polypeptide reads, in one-letter code: Volume-regulated anion channel subunit LRRC8E (796 aa).

Residues 1–22 (MIPVAEFKQFTEQQPAFKVLKP) lie on the Cytoplasmic side of the membrane. Residues 23-43 (WWDVLAEYLTVAMLMIGVFGC) traverse the membrane as a helical segment. Over 44-116 (TLQVTQDKII…YETALHWYAK (73 aa)) the chain is Extracellular. Cys54 and Cys301 are oxidised to a cystine. Asn63 carries an N-linked (GlcNAc...) asparagine glycan. Residues 117–137 (YFPYLVVIHTLIFMVCTSFWF) form a helical membrane-spanning segment. The Cytoplasmic portion of the chain corresponds to 138–265 (KFPGTSSKIE…IRQTVLKVCK (128 aa)). Residues 266–286 (FLAILVYNLVYVEKISFLVAC) traverse the membrane as a helical segment. At 287 to 313 (RVETSEVTGYASFCCNHTKAHLFSKLA) the chain is on the extracellular side. N-linked (GlcNAc...) asparagine glycosylation occurs at Asn302. Residues 314–334 (FCYISFVCIYGLTCIYTLYWL) form a helical membrane-spanning segment. Topologically, residues 335–796 (FHRPLKEYSF…AEVRDKMEEE (462 aa)) are cytoplasmic. LRR repeat units follow at residues 508–529 (GLEELHLEGLFPQELARAATLE), 536–557 (QLKVLSLRSNAGKVPASVTDVA), 559–579 (HLQRLSLHNDGARLVALNSLK), 583–604 (ALRELELVACGLERIPHAVFSL), 606–627 (ALQELDLKDNHLRSIEEILSFQ), 631–652 (KLVTLRLWHNQIAYVPEHVRKL), 654–675 (SLEQLYLSYNKLETLPSQLGLC), 677–698 (GLRLLDVSHNGLHSLPPEVGLL), 700–721 (NLQHLALSYNALEALPEELFFC), 723–744 (KLRTLLLGDNQLSQLSPHVGAL), and 746–767 (ALSRLELKGNRLEALPEELGNC).

This sequence belongs to the LRRC8 family. In terms of assembly, heterohexamer; oligomerizes with other LRRC8 proteins (LRRC8A, LRRC8C, LRRC8D and/or LRRC8B) to form a heterohexamer. In vivo, the subunit composition may depend primarily on expression levels, and heterooligomeric channels containing various proportions of the different LRRC8 proteins may coexist.

The protein resides in the cell membrane. It is found in the endoplasmic reticulum membrane. It localises to the lysosome membrane. It carries out the reaction chloride(in) = chloride(out). It catalyses the reaction iodide(out) = iodide(in). The enzyme catalyses taurine(out) = taurine(in). The catalysed reaction is 2',3'-cGAMP(out) = 2',3'-cGAMP(in). Non-essential component of the volume-regulated anion channel (VRAC, also named VSOAC channel), an anion channel required to maintain a constant cell volume in response to extracellular or intracellular osmotic changes. The VRAC channel conducts iodide better than chloride and can also conduct organic osmolytes like taurine. Mediates efflux of amino acids, such as aspartate, in response to osmotic stress. The VRAC channel also mediates transport of immunoreactive cyclic dinucleotide GMP-AMP (2'-3'-cGAMP), an immune messenger produced in response to DNA virus in the cytosol. Channel activity requires LRRC8A plus at least one other family member (LRRC8B, LRRC8C, LRRC8D or LRRC8E); channel characteristics depend on the precise subunit composition. Also plays a role in lysosome homeostasis by forming functional lysosomal VRAC channels in response to low cytoplasmic ionic strength condition: lysosomal VRAC channels are necessary for the formation of large lysosome-derived vacuoles, which store and then expel excess water to maintain cytosolic water homeostasis. This Homo sapiens (Human) protein is Volume-regulated anion channel subunit LRRC8E.